The primary structure comprises 1756 residues: Periplakin (1756 aa).

Ser14 carries the post-translational modification Phosphoserine. Coiled-coil stretches lie at residues Thr16–Tyr125 and Lys188–Val389. Spectrin repeat units lie at residues Gln216 to Lys317, His323 to Gln485, Arg505 to Asp612, and Glu733 to Glu861. The 57-residue stretch at Leu399–Thr455 folds into the SH3 domain. Ser465 is subject to Phosphoserine. Coiled coils occupy residues Leu585–Ser820 and Asp886–Val1645. Ser887, Ser949, Ser1584, and Ser1657 each carry phosphoserine. An interacts with BFSP2 and VIM region spans residues Glu1557–Lys1756. 2 Plectin repeats span residues Glu1651–Phe1685 and Val1700–Tyr1735.

The protein belongs to the plakin or cytolinker family. As to quaternary structure, homodimer or a heterodimer with EVPL. Found in a complex composed of PPL (via C-terminal linker domain), BFSP1 and BFSP2 in the retinal lens. Within the complex interacts (via C-terminal linker domain) with BFSP2. Interacts with VIM. Binds to the PH domain of AKT1. Interacts with FCGR1A. May interact with PPHLN1. Expressed in stratified squamous epithelia and in some other epithelia.

The protein localises to the cell junction. Its subcellular location is the desmosome. It is found in the cytoplasm. It localises to the cytoskeleton. The protein resides in the cell membrane. Component of the cornified envelope of keratinocytes. May link the cornified envelope to desmosomes and intermediate filaments. May act as a localization signal in PKB/AKT-mediated signaling. The polypeptide is Periplakin (PPL) (Homo sapiens (Human)).